The following is a 524-amino-acid chain: M phase phosphoprotein 10 (524 aa).

The Nuclear localization signal 1 signature appears at 85–92 (VKRFAKNP). Disordered stretches follow at residues 100–243 (KLAL…KLGK) and 259–283 (KLKD…STHE). Over residues 109 to 168 (DDIDEMDMDGFDSDDVDDEDKEIESNDSEGEDEEEEEEDEEEEEEEEEEEEEEKDGDNEG) the composition is skewed to acidic residues. Residues 131–165 (IESNDSEGEDEEEEEEDEEEEEEEEEEEEEEKDGD) adopt a coiled-coil conformation. Residues 169–180 (IEDKFFKIKELE) show a composition bias toward basic and acidic residues. Over residues 181–191 (EFLEEGEAEEY) the composition is skewed to acidic residues. A compositionally biased stretch (basic residues) spans 196–207 (KNKKGVAQRKKQ). A compositionally biased stretch (acidic residues) spans 210-238 (SDDEDEEDDDDEEEDVEFDAFAGGDDEET). Residues 257 to 302 (KMKLKDLSEDEEAEIENKGNEKLSTHERARLKLQSKIEQMEKANLD) are a coiled coil. Residues 271–283 (IENKGNEKLSTHE) show a composition bias toward basic and acidic residues. Residues 373 to 380 (GKREAKEL) carry the Nuclear localization signal 2 motif. The interval 479–524 (KGDIKDESELTQEDRKRRRANKKRKFKAESANEPPKKALDTSTKNP) is disordered. Residues 480–493 (GDIKDESELTQEDR) are compositionally biased toward basic and acidic residues. A compositionally biased stretch (basic residues) spans 494 to 504 (KRRRANKKRKF). A compositionally biased stretch (basic and acidic residues) spans 505–517 (KAESANEPPKKAL).

The protein belongs to the MPP10 family. As to quaternary structure, component of the ribosomal small subunit (SSU) processome. Interacts with THAL in the nucleus.

Its subcellular location is the nucleus. It localises to the nucleolus. Involved in nucleolar processing of pre-18S ribosomal RNA. The chain is M phase phosphoprotein 10 from Arabidopsis thaliana (Mouse-ear cress).